The chain runs to 615 residues: Vitamin B12 transporter BtuB (615 aa).

Positions 1-20 (MIKKISLLTALSVTAFSGWA) are cleaved as a signal peptide. The TonB box signature appears at 26–33 (NAMVVTAN). Residues 38–152 (PVNSVLAPTT…IGGVVNIITT (115 aa)) enclose the TBDR plug domain. Cyanocob(III)alamin-binding positions include S85, N92, and 110 to 111 (IS). Positions 155 to 615 (KNGTTLNAGV…EYYLTGSYTF (461 aa)) constitute a TBDR beta-barrel domain. A run of 3 beta stranded transmembrane segments spans residues 158–165 (TTLNAGVG), 169–178 (YQSYDAATQQ), and 184–195 (TTATLAGNYVYT). Residues D199, Q210, D212, and D214 each coordinate Ca(2+). The next 2 beta stranded transmembrane spans lie at 216–226 (FMSKSLYGTVE) and 231–247 (DQFSGFLRGYGYDNRTD). Ca(2+) is bound by residues Y248, D249, and D255. 14 beta stranded membrane-spanning segments follow: residues 257 to 271 (RQLYSQTWDTGLRYQ), 273 to 290 (GIYSTQLIGSYSHSKDYD), 303 to 319 (TLVDSQQYNAQWGNVLQ), 322 to 331 (AGTVSAGVDW), 347 to 363 (ESQNNTGIYLTGQQRFA), 365 to 375 (IVLEGSVRGDD), 379 to 394 (FGWHNTWRTGASWEFI), 397 to 411 (YSLIASYGTAFKAPN), 429 to 438 (ESKQWESGVE), 444 to 453 (VIWRVSGYRN), 468 to 486 (VYENVGKAKIKGIEATASF), 490 to 505 (PVGHRISYDYVDSRNA), 513 to 525 (RRAKQQVKYQLDW), and 531 to 546 (DWSVTYQYLGSRYDKD). Cyanocob(III)alamin is bound at residue T303. Residue R513 participates in cyanocob(III)alamin binding. Y547 is a binding site for cyanocob(III)alamin. The next 3 membrane-spanning stretches (beta stranded) occupy residues 559-573 (TVKLGGVSLWDLAAS), 586-597 (IANLFDKDYETA), and 603-615 (AGREYYLTGSYTF). The TonB C-terminal box motif lies at 598-615 (YGYRTAGREYYLTGSYTF).

The protein belongs to the TonB-dependent receptor family. BtuB (TC 1.B.14.3.1) subfamily.

Its subcellular location is the cell outer membrane. In terms of biological role, involved in the active translocation of vitamin B12 (cyanocobalamin) across the outer membrane to the periplasmic space. It derives its energy for transport by interacting with the trans-periplasmic membrane protein TonB. This Pectobacterium atrosepticum (strain SCRI 1043 / ATCC BAA-672) (Erwinia carotovora subsp. atroseptica) protein is Vitamin B12 transporter BtuB.